The primary structure comprises 96 residues: Co-chaperonin GroES (96 aa).

The protein belongs to the GroES chaperonin family. Heptamer of 7 subunits arranged in a ring. Interacts with the chaperonin GroEL.

It localises to the cytoplasm. Functionally, together with the chaperonin GroEL, plays an essential role in assisting protein folding. The GroEL-GroES system forms a nano-cage that allows encapsulation of the non-native substrate proteins and provides a physical environment optimized to promote and accelerate protein folding. GroES binds to the apical surface of the GroEL ring, thereby capping the opening of the GroEL channel. The sequence is that of Co-chaperonin GroES from Hyphomonas neptunium (strain ATCC 15444).